The chain runs to 81 residues: Neuronatin (81 aa).

Belongs to the neuronatin family.

Its function is as follows. May participate in the maintenance of segment identity in the hindbrain and pituitary development, and maturation or maintenance of the overall structure of the nervous system. May function as a regulatory subunit of ion channels. This chain is Neuronatin (NNAT), found in Homo sapiens (Human).